Here is a 1111-residue protein sequence, read N- to C-terminus: Zinc finger protein GLI1 (1111 aa).

Residues 52–78 (GYGAARETSSCTEGSLFPPPPPPRSSV) form a disordered region. The interaction with SUFU stretch occupies residues 123–127 (SYGHL). 5 consecutive C2H2-type zinc fingers follow at residues 238–263 (TDCR…NSEH), 271–298 (FVCH…MRRH), 304–328 (HKCT…LRSH), 334–359 (YMCE…NRTH), and 365–390 (YVCK…KTVH). Residues 286 to 294 (KAQYMLVVH) are interaction with DNA. Interaction with DNA regions lie at residues 348 to 353 (ASDRAK) and 378 to 384 (DPSSLRK). The interval 378-487 (DPSSLRKHVK…EDLSSLDEGP (110 aa)) is disordered. Residues 416–431 (EPKREREGGSGREESR) are compositionally biased toward basic and acidic residues. A compositionally biased stretch (polar residues) spans 439-465 (MPQQSPGAQSSCSSDHSPAGSAANTDS). An N6-acetyllysine modification is found at Lys-520. Disordered stretches follow at residues 528–583 (GAPV…LPGL), 598–649 (ARGS…RAAD), 673–692 (TGRN…QPPS), and 832–891 (PCLN…SSHS). Residues 546–562 (SSSSSMSSAYTVSRRSS) are compositionally biased toward low complexity. The span at 640 to 649 (RASDPARAAD) shows a compositional bias: basic and acidic residues. Residues 855 to 870 (LPQPQYPQSGPYPQPP) show a composition bias toward pro residues. Lys-1008 is covalently cross-linked (Glycyl lysine isopeptide (Lys-Gly) (interchain with G-Cter in SUMO2)). The interval 1064–1093 (LSPPLSHEQGDSSKNTPSPSGPPNMAVGNM) is disordered.

It belongs to the GLI C2H2-type zinc-finger protein family. Interacts with KIF7. Interacts with STK36. Interacts with ZIC1; the interaction enhances transcription activation. Interacts with SUFU; this inhibits transcriptional activation by GLI1. Phosphorylated in vitro by ULK3. In terms of processing, acetylation at Lys-520 down-regulates transcriptional activity. Deacetylated by HDAC1. Post-translationally, ubiquitinated by the CRL2(FEM1B) complex, suppressing GLI1 transcriptional activator activity.

It localises to the cytoplasm. Its subcellular location is the nucleus. Its function is as follows. Acts as a transcriptional activator. Binds to the DNA consensus sequence 5'-GACCACCCA-3'. Regulates the transcription of specific genes during normal development. Plays a role in craniofacial development and digital development, as well as development of the central nervous system and gastrointestinal tract. Mediates SHH signaling. Plays a role in cell proliferation and differentiation via its role in SHH signaling. This Mus musculus (Mouse) protein is Zinc finger protein GLI1 (Gli1).